The following is a 66-amino-acid chain: Large ribosomal subunit protein bL35 (66 aa).

Composition is skewed to basic residues over residues 1 to 16 (MPKQKTHRGLAKRVKR) and 23 to 45 (KRGRAFTSHRFHGKTKKQRRQLR). The disordered stretch occupies residues 1 to 53 (MPKQKTHRGLAKRVKRTGGGGLKRGRAFTSHRFHGKTKKQRRQLRKASMVAKG).

The protein belongs to the bacterial ribosomal protein bL35 family.

This is Large ribosomal subunit protein bL35 from Enterococcus faecalis (strain ATCC 700802 / V583).